A 584-amino-acid polypeptide reads, in one-letter code: Arginine--tRNA ligase (584 aa).

Positions 126–136 (PNIAKEMHVGH) match the 'HIGH' region motif.

Belongs to the class-I aminoacyl-tRNA synthetase family. Monomer.

It localises to the cytoplasm. The enzyme catalyses tRNA(Arg) + L-arginine + ATP = L-arginyl-tRNA(Arg) + AMP + diphosphate. The protein is Arginine--tRNA ligase of Synechococcus elongatus (strain ATCC 33912 / PCC 7942 / FACHB-805) (Anacystis nidulans R2).